The sequence spans 141 residues: MSYYSGYSGGLGYGYGSSFGGLGCGCNSIRRLGCGSGYGGFGYGSGYGGFGGFGYGSGYGGYGYGSGYGGFGGFGYGSGYGGFGYGSGYGGFGGFGYGSGYGGYGYGSGFGGYGYGSGFRGYGCGCRRSSCCGGYGFSSFY.

The interval 5–135 (SGYSGGLGYG…CRRSSCCGGY (131 aa)) is 48 X 2 AA repeats of G-[YCGS].

Belongs to the KRTAP type 19 family. As to quaternary structure, interacts with hair keratins. In terms of tissue distribution, strong expression in narrowly defined pattern restricted to the lower and middle cortical regions of the hair shaft in both developing and cycling hair. During hair follicle regression (catagen), expression levels decrease until expression is no longer detectable in follicles at resting stage (telogen).

Functionally, in the hair cortex, hair keratin intermediate filaments are embedded in an interfilamentous matrix, consisting of hair keratin-associated proteins (KRTAP), which are essential for the formation of a rigid and resistant hair shaft through their extensive disulfide bond cross-linking with abundant cysteine residues of hair keratins. The matrix proteins include the high-sulfur and high-glycine-tyrosine keratins. In Mus musculus (Mouse), this protein is Keratin-associated protein 19-2 (Krtap19-2).